A 748-amino-acid chain; its full sequence is Catalase-peroxidase (748 aa).

The tryptophyl-tyrosyl-methioninium (Trp-Tyr) (with M-264) cross-link spans tryptophan 92–tyrosine 238. Histidine 93 serves as the catalytic Proton acceptor. A cross-link (tryptophyl-tyrosyl-methioninium (Tyr-Met) (with W-92)) is located at residues tyrosine 238–methionine 264. Residue histidine 279 participates in heme b binding.

Belongs to the peroxidase family. Peroxidase/catalase subfamily. In terms of assembly, homodimer or homotetramer. Requires heme b as cofactor. Formation of the three residue Trp-Tyr-Met cross-link is important for the catalase, but not the peroxidase activity of the enzyme.

The enzyme catalyses H2O2 + AH2 = A + 2 H2O. It carries out the reaction 2 H2O2 = O2 + 2 H2O. Its function is as follows. Bifunctional enzyme with both catalase and broad-spectrum peroxidase activity. The polypeptide is Catalase-peroxidase (Xanthomonas campestris pv. campestris (strain 8004)).